Here is a 444-residue protein sequence, read N- to C-terminus: Phosphoglucosamine mutase (444 aa).

Catalysis depends on serine 103, which acts as the Phosphoserine intermediate. Positions 103, 241, 243, and 245 each coordinate Mg(2+). Position 103 is a phosphoserine (serine 103).

The protein belongs to the phosphohexose mutase family. It depends on Mg(2+) as a cofactor. Post-translationally, activated by phosphorylation.

The enzyme catalyses alpha-D-glucosamine 1-phosphate = D-glucosamine 6-phosphate. Its function is as follows. Catalyzes the conversion of glucosamine-6-phosphate to glucosamine-1-phosphate. This Deinococcus geothermalis (strain DSM 11300 / CIP 105573 / AG-3a) protein is Phosphoglucosamine mutase.